A 432-amino-acid polypeptide reads, in one-letter code: Adenylosuccinate synthetase (432 aa).

Residues 13-19 (GDEGKGK) and 41-43 (GHT) each bind GTP. D14 acts as the Proton acceptor in catalysis. Mg(2+)-binding residues include D14 and G41. Residues 14–17 (DEGK), 39–42 (NAGH), T130, R144, Q225, T240, and R304 contribute to the IMP site. H42 (proton donor) is an active-site residue. 300 to 306 (AVTGRPR) contributes to the substrate binding site. GTP contacts are provided by residues R306, 332-334 (KLD), and 415-417 (STG).

It belongs to the adenylosuccinate synthetase family. Homodimer. Requires Mg(2+) as cofactor.

The protein localises to the cytoplasm. The catalysed reaction is IMP + L-aspartate + GTP = N(6)-(1,2-dicarboxyethyl)-AMP + GDP + phosphate + 2 H(+). Its pathway is purine metabolism; AMP biosynthesis via de novo pathway; AMP from IMP: step 1/2. Its function is as follows. Plays an important role in the de novo pathway of purine nucleotide biosynthesis. Catalyzes the first committed step in the biosynthesis of AMP from IMP. The polypeptide is Adenylosuccinate synthetase (Pasteurella multocida (strain Pm70)).